The chain runs to 272 residues: NAD kinase (272 aa).

D50 serves as the catalytic Proton acceptor. NAD(+)-binding positions include 50-51, 126-127, R152, D154, 165-170, and A189; these read DG, NE, and TAYNKS.

This sequence belongs to the NAD kinase family. A divalent metal cation is required as a cofactor.

The protein localises to the cytoplasm. It carries out the reaction NAD(+) + ATP = ADP + NADP(+) + H(+). Functionally, involved in the regulation of the intracellular balance of NAD and NADP, and is a key enzyme in the biosynthesis of NADP. Catalyzes specifically the phosphorylation on 2'-hydroxyl of the adenosine moiety of NAD to yield NADP. The polypeptide is NAD kinase (Streptococcus pneumoniae (strain Hungary19A-6)).